A 406-amino-acid polypeptide reads, in one-letter code: tRNA-specific 2-thiouridylase MnmA (406 aa).

ATP contacts are provided by residues 42-49 (GLSGGVDS) and Leu-68. Cys-129 (nucleophile) is an active-site residue. Cys-129 and Cys-239 are disulfide-bonded. Position 154 (Gly-154) interacts with ATP. Residues 189–191 (KDQ) form an interaction with tRNA region. The active-site Cysteine persulfide intermediate is the Cys-239. The interaction with tRNA stretch occupies residues 344 to 345 (RY).

Belongs to the MnmA/TRMU family.

The protein localises to the cytoplasm. The enzyme catalyses S-sulfanyl-L-cysteinyl-[protein] + uridine(34) in tRNA + AH2 + ATP = 2-thiouridine(34) in tRNA + L-cysteinyl-[protein] + A + AMP + diphosphate + H(+). Catalyzes the 2-thiolation of uridine at the wobble position (U34) of tRNA, leading to the formation of s(2)U34. This is tRNA-specific 2-thiouridylase MnmA from Prochlorococcus marinus (strain SARG / CCMP1375 / SS120).